We begin with the raw amino-acid sequence, 245 residues long: MSQSTSVLRRNGFTFKQFFVAHDRCAMKVGTDGILLGAWAPVAGVKRCLDIGAGSGLLALMLAQRTDDSVIIDAVELESEAAAQAQENINQSPWAERINVHTADIQQWITQQTVRFDLIISNPPYYQQGVECATPQREQARYTTTLDHPSLLTCAAECITEEGFFCVVLPEQIGNGFTELALSMGWHLRLRTDVAENEARLPHRVLLAFSPQAGECFSDRLVIRGPDQNYSEAYTALTQAFYLFM.

Belongs to the methyltransferase superfamily. tRNA (adenine-N(6)-)-methyltransferase family.

Its subcellular location is the cytoplasm. The enzyme catalyses adenosine(37) in tRNA1(Val) + S-adenosyl-L-methionine = N(6)-methyladenosine(37) in tRNA1(Val) + S-adenosyl-L-homocysteine + H(+). Its function is as follows. Specifically methylates the adenine in position 37 of tRNA(1)(Val) (anticodon cmo5UAC). In Escherichia coli O139:H28 (strain E24377A / ETEC), this protein is tRNA1(Val) (adenine(37)-N6)-methyltransferase.